Consider the following 627-residue polypeptide: MTRIQDDLFATVNAEWLENAEIPADKPRISAFDELVLKNEKNLAKDLADLSQNLPTDNPELLEAIKFYNKAGDWQAREKADFSAVKNELAKVETLNTFEDFKNNLTQLVFHSQAPLPFSFSVEPDMKDAIHYSLGFSGPGLILPDTTYYNDEHPRKKELLDFWAKNTSEILKTFDVENAEEIAKSALKFDALLVPSANTSEEWAKYAELYHPISTDSFVSKVKNLDLKSLIKDLVKTEPDKVIVYEDRFYESFDSLINEENWSLIKAWMLTKIARGATSFFNEDLRILGGAYGRFLSNVQEARSQEKHQLDLTESYFSQVIGLFYGKKYFGEAGKADVKRMVTAMIKVYQARLSKNEWLSQETAEKAIEKLDAITPFIGFPDKLPEIYSRLKTTSGSLYEDALKFDEILTARTFEKFSEDVDKTSWHMPAHMVNAYYSPDSNTIVFPAAILQAPFYSLEQSSSQNYGGIGTVIAHEISHAFDNNGAQFDKEGNLNKWWLDEDYEAFEEKQKEMIALFDGVETEAGPANGKLIVSENIADQGGITAALTAAKDEKDVDLKAFFSQWAKIWRMKASKEFQQMLLSMDFHAPAKLRANIPPTNLEEFYDTFDVKETDKMYRAPENRLKIW.

A Peptidase M13 domain is found at 1–627 (MTRIQDDLFA…RAPENRLKIW (627 aa)). Residue His-475 participates in Zn(2+) binding. Glu-476 is a catalytic residue. The Zn(2+) site is built by His-479 and Glu-535. The Proton donor role is filled by Asp-539.

It belongs to the peptidase M13 family. As to quaternary structure, monomer. Requires Zn(2+) as cofactor.

Its subcellular location is the cytoplasm. Endopeptidase with broad substrate specificity for several oligopeptides. The sequence is that of Neutral endopeptidase (pepO) from Lactococcus lactis subsp. cremoris (Streptococcus cremoris).